The chain runs to 748 residues: Polyribonucleotide nucleotidyltransferase (748 aa).

Mg(2+) contacts are provided by Asp-484 and Asp-490. In terms of domain architecture, KH spans Pro-551–Ile-610. An S1 motif domain is found at Gly-620–Arg-688. Residues Glu-693–Ser-748 form a disordered region. Positions Asp-699–Glu-736 are enriched in basic and acidic residues.

It belongs to the polyribonucleotide nucleotidyltransferase family. It depends on Mg(2+) as a cofactor.

Its subcellular location is the cytoplasm. It carries out the reaction RNA(n+1) + phosphate = RNA(n) + a ribonucleoside 5'-diphosphate. Functionally, involved in mRNA degradation. Catalyzes the phosphorolysis of single-stranded polyribonucleotides processively in the 3'- to 5'-direction. The chain is Polyribonucleotide nucleotidyltransferase from Zymomonas mobilis subsp. mobilis (strain ATCC 31821 / ZM4 / CP4).